The sequence spans 241 residues: Alkylated DNA repair protein ALKBH6 homolog (241 aa).

The Fe2OG dioxygenase domain occupies 87 to 232 (AINHVLINEY…RVSLTCRLVP (146 aa)). The Fe cation site is built by His105, Asp107, and His181. The 2-oxoglutarate site is built by Arg223 and Arg229.

It belongs to the alkB family. Requires Fe(2+) as cofactor.

The protein resides in the nucleus. In terms of biological role, probable RNA demethylase that binds to both N6-methyladenosine-containing- (m(6)A) and C5-methylcytidine-containing- (m(5)C) RNAs, thus being a probable m(6)A and m(5)C eraser. Involved in responses to abscisic acid (ABA) via the modulation of the expression of ABA signaling-related genes (e.g. ABI3 and ABI4). Acts as a negative regulator during seed germination under abiotic stresses (e.g. salt, cold and ABA). Positive modulator of seedling growth and survival in response to drought and heat, but counteracts tolerance to salt. This chain is Alkylated DNA repair protein ALKBH6 homolog, found in Arabidopsis thaliana (Mouse-ear cress).